Reading from the N-terminus, the 652-residue chain is 2-oxoglutarate carboxylase large subunit (652 aa).

Residues 26-288 enclose the Pyruvate carboxyltransferase domain; it reads ILITDLTPRD…DTGIDMKKLD (263 aa). Substrate contacts are provided by residues 34–38 and Arg105; that span reads RDGQQ. An a divalent metal cation-binding site is contributed by Asp35. A divalent metal cation is bound by residues Lys196, His227, and His229. Lys196 carries the post-translational modification N6-carboxylysine. Thr362 is a substrate binding site. A Biotinyl-binding domain is found at 563 to 643; it reads AEEKGIPKAT…TPDDALLRIK (81 aa). Lys609 carries the N6-biotinyllysine modification.

As to quaternary structure, heterohexadecamer of 8 large subunits and 8 small subunits. The cofactor is Mg(2+). Mn(2+) is required as a cofactor. It depends on Co(2+) as a cofactor. Post-translationally, biotinylated.

It carries out the reaction hydrogencarbonate + 2-oxoglutarate + ATP = (S)-oxalosuccinate + ADP + phosphate + H(+). In Hydrogenobacter thermophilus (strain DSM 6534 / IAM 12695 / TK-6), this protein is 2-oxoglutarate carboxylase large subunit.